The following is a 1230-amino-acid chain: Soluble starch synthase 3, chloroplastic/amyloplastic (1230 aa).

A chloroplast-targeting transit peptide spans 1–60 (MDVPFPLHRSLSCTSVSNAITHLKIKPILGFVSHGTTSLSVQSSSWRKDGMVTGVSFSIC). Residues 66 to 189 (RRRRKVSTPR…KDAVKLNKSK (124 aa)) are disordered. Basic and acidic residues predominate over residues 124–145 (VEARVETSDDDTKGVVRDHKFL). Positions 152 to 170 (NGSTKSISMSPVRVSSQFV) are enriched in polar residues. Over residues 177–189 (GDDKDAVKLNKSK) the composition is skewed to basic and acidic residues. Lys794 lines the ADP-alpha-D-glucose pocket.

Belongs to the glycosyltransferase 1 family. Bacterial/plant glycogen synthase subfamily. Tuber, sink and source leaves.

It is found in the plastid. Its subcellular location is the chloroplast. The protein resides in the amyloplast. The enzyme catalyses [(1-&gt;4)-alpha-D-glucosyl](n) + ADP-alpha-D-glucose = [(1-&gt;4)-alpha-D-glucosyl](n+1) + ADP + H(+). The protein operates within glycan biosynthesis; starch biosynthesis. In terms of biological role, may account for most of the soluble starch synthase activity in the tubers. Contributes only a tiny percentage of the granule-bound activity, but may also contribute to the deposition of transient starch in chloroplasts of leaves. In Solanum tuberosum (Potato), this protein is Soluble starch synthase 3, chloroplastic/amyloplastic (SS3).